The following is a 253-amino-acid chain: MKFCIIGYPVRHSISPRLYNEYFKRAGMNHSYGMEEIPPESFDTEIRRILEEYDGFNATIPHKERVMRYVEPSEDAQRIKAVNCVFRGKGYNTDWVGVVKSLEGVEVKEPVVVVGAGGAARAVIYALLQMGVKDIWVVNRTIERAKALDFPVKIFSLDQLDEVVKKAKSLFNTTSVGMKGEELPVSDDSLKNLSLVYDVIYFDTPLVVKARKLGVKHIIKGNLMFYYQAMENLKIWGIYDEEVFKEVFGEVLK.

Residues 13-15 (SIS) and T59 contribute to the shikimate site. The Proton acceptor role is filled by K63. E74 contacts NADP(+). Residues N83 and D94 each contribute to the shikimate site. NADP(+) contacts are provided by residues 115–119 (GAGGA), 139–144 (NRTIER), and V199. Y201 lines the shikimate pocket. Position 221 (G221) interacts with NADP(+).

Belongs to the shikimate dehydrogenase family. Homodimer.

The enzyme catalyses shikimate + NADP(+) = 3-dehydroshikimate + NADPH + H(+). It participates in metabolic intermediate biosynthesis; chorismate biosynthesis; chorismate from D-erythrose 4-phosphate and phosphoenolpyruvate: step 4/7. Involved in the biosynthesis of the chorismate, which leads to the biosynthesis of aromatic amino acids. Catalyzes the reversible NADPH linked reduction of 3-dehydroshikimate (DHSA) to yield shikimate (SA). This Thermotoga maritima (strain ATCC 43589 / DSM 3109 / JCM 10099 / NBRC 100826 / MSB8) protein is Shikimate dehydrogenase (NADP(+)).